Consider the following 1755-residue polypeptide: Transposon Ty1-LR2 Gag-Pol polyprotein (1755 aa).

3 stretches are compositionally biased toward polar residues: residues 1 to 23 (MESQ…SVTS), 48 to 60 (TKAN…TPAS), and 127 to 152 (QSQF…GNTF). 3 disordered regions span residues 1-93 (MESQ…MMTQ), 126-174 (PQSQ…PPPM), and 352-421 (GSRN…SKST). Over residues 153–165 (TDSSSADSDMTST) the composition is skewed to low complexity. The RNA-binding stretch occupies residues 299–401 (NNGIHINNKV…NSKSKTARAH (103 aa)). Residues 402 to 418 (NVSTSNNSPSTDNDSIS) are compositionally biased toward low complexity. Serine 416 is subject to Phosphoserine. Aspartate 461 acts as the For protease activity; shared with dimeric partner in catalysis. An integrase-type zinc finger-like region spans residues 583–640 (NVHTSESTRKYPYPFIHRMLAHANAPTIRYSLKNNTITYFNESDVDWSSAIDYQCPDC). The region spanning 660 to 835 (NSYEPFQYLH…AGLDISTLLP (176 aa)) is the Integrase catalytic domain. Residues aspartate 671 and aspartate 736 each coordinate Mg(2+). Disordered stretches follow at residues 956–1087 (SKAV…ETEK), 1092–1111 (RSPS…NIVP), and 1130–1187 (DLPL…DNET). Low complexity predominate over residues 960 to 969 (SPTDSTPPST). Residues 1005–1015 (STPQISNIEST) show a composition bias toward polar residues. Basic and acidic residues predominate over residues 1038-1053 (ESSHASKSKDFRHSDS). Composition is skewed to polar residues over residues 1054–1082 (YSEN…QISD) and 1101–1111 (PENNSSHNIVP). A Bipartite nuclear localization signal motif is present at residues 1178–1212 (KKRSLEDNETEIKVSRDTWNTKNMRSLEPPRSKKR). The 139-residue stretch at 1338-1476 (NNYYITQLDI…DILGLEIKYQ (139 aa)) folds into the Reverse transcriptase Ty1/copia-type domain. 6 residues coordinate Mg(2+): aspartate 1346, aspartate 1427, aspartate 1428, aspartate 1610, glutamate 1652, and aspartate 1685. The 143-residue stretch at 1610–1752 (DASYGNQPYY…IKTFKLLTNK (143 aa)) folds into the RNase H Ty1/copia-type domain.

In terms of assembly, the capsid protein forms a homotrimer, from which the VLPs are assembled. The protease is a homodimer, whose active site consists of two apposed aspartic acid residues. Initially, virus-like particles (VLPs) are composed of the structural unprocessed proteins Gag and Gag-Pol, and also contain the host initiator methionine tRNA (tRNA(i)-Met) which serves as a primer for minus-strand DNA synthesis, and a dimer of genomic Ty RNA. Processing of the polyproteins occurs within the particle and proceeds by an ordered pathway, called maturation. First, the protease (PR) is released by autocatalytic cleavage of the Gag-Pol polyprotein yielding capsid protein p45 and a Pol-p154 precursor protein. This cleavage is a prerequisite for subsequent processing of Pol-p154 at the remaining sites to release the mature structural and catalytic proteins. Maturation takes place prior to the RT reaction and is required to produce transposition-competent VLPs.

It is found in the cytoplasm. The protein resides in the nucleus. The catalysed reaction is DNA(n) + a 2'-deoxyribonucleoside 5'-triphosphate = DNA(n+1) + diphosphate. It carries out the reaction Endonucleolytic cleavage to 5'-phosphomonoester.. In terms of biological role, capsid protein (CA) is the structural component of the virus-like particle (VLP), forming the shell that encapsulates the retrotransposons dimeric RNA genome. The particles are assembled from trimer-clustered units and there are holes in the capsid shells that allow for the diffusion of macromolecules. CA also has nucleocapsid-like chaperone activity, promoting primer tRNA(i)-Met annealing to the multipartite primer-binding site (PBS), dimerization of Ty1 RNA and initiation of reverse transcription. Functionally, the aspartyl protease (PR) mediates the proteolytic cleavages of the Gag and Gag-Pol polyproteins after assembly of the VLP. Its function is as follows. Reverse transcriptase/ribonuclease H (RT) is a multifunctional enzyme that catalyzes the conversion of the retro-elements RNA genome into dsDNA within the VLP. The enzyme displays a DNA polymerase activity that can copy either DNA or RNA templates, and a ribonuclease H (RNase H) activity that cleaves the RNA strand of RNA-DNA heteroduplexes during plus-strand synthesis and hydrolyzes RNA primers. The conversion leads to a linear dsDNA copy of the retrotransposon that includes long terminal repeats (LTRs) at both ends. Integrase (IN) targets the VLP to the nucleus, where a subparticle preintegration complex (PIC) containing at least integrase and the newly synthesized dsDNA copy of the retrotransposon must transit the nuclear membrane. Once in the nucleus, integrase performs the integration of the dsDNA into the host genome. The sequence is that of Transposon Ty1-LR2 Gag-Pol polyprotein (TY1B-LR2) from Saccharomyces cerevisiae (strain ATCC 204508 / S288c) (Baker's yeast).